The chain runs to 91 residues: UPF0298 protein OB1449 (91 aa).

Belongs to the UPF0298 family.

Its subcellular location is the cytoplasm. In Oceanobacillus iheyensis (strain DSM 14371 / CIP 107618 / JCM 11309 / KCTC 3954 / HTE831), this protein is UPF0298 protein OB1449.